We begin with the raw amino-acid sequence, 147 residues long: Nucleoside diphosphate kinase (147 aa).

ATP-binding residues include Lys9, Phe57, Arg85, Thr91, Arg102, and Asn112. The active-site Pros-phosphohistidine intermediate is the His115.

It belongs to the NDK family. In terms of assembly, homotetramer. Mg(2+) is required as a cofactor.

Its subcellular location is the cytoplasm. The catalysed reaction is a 2'-deoxyribonucleoside 5'-diphosphate + ATP = a 2'-deoxyribonucleoside 5'-triphosphate + ADP. It carries out the reaction a ribonucleoside 5'-diphosphate + ATP = a ribonucleoside 5'-triphosphate + ADP. Major role in the synthesis of nucleoside triphosphates other than ATP. The ATP gamma phosphate is transferred to the NDP beta phosphate via a ping-pong mechanism, using a phosphorylated active-site intermediate. The protein is Nucleoside diphosphate kinase of Listeria innocua serovar 6a (strain ATCC BAA-680 / CLIP 11262).